The primary structure comprises 113 residues: Class I hydrophobin POH3 (113 aa).

The N-terminal stretch at 1–21 (MFSRVIFCTFLILPLLAAATA) is a signal peptide. 4 cysteine pairs are disulfide-bonded: Cys-32/Cys-92, Cys-39/Cys-86, Cys-40/Cys-73, and Cys-93/Cys-106. Residue Asn-110 is glycosylated (N-linked (GlcNAc...) asparagine).

Belongs to the fungal hydrophobin family. Self-assembles to form functional amyloid fibrils called rodlets. Self-assembly into fibrillar rodlets occurs spontaneously at hydrophobic:hydrophilic interfaces and the rodlets further associate laterally to form amphipathic monolayers. In terms of tissue distribution, expressionn is switched off in the fruiting bodies but abundantly expressed in the vegetative mycelium of both monokaryon and dikaryon.

It is found in the secreted. Its subcellular location is the cell wall. Its function is as follows. Aerial growth, conidiation, and dispersal of filamentous fungi in the environment rely upon a capability of their secreting small amphipathic proteins called hydrophobins (HPBs) with low sequence identity. Class I can self-assemble into an outermost layer of rodlet bundles on aerial cell surfaces, conferring cellular hydrophobicity that supports fungal growth, development and dispersal; whereas Class II form highly ordered films at water-air interfaces through intermolecular interactions but contribute nothing to the rodlet structure. POH3 is a class I hydrophobin that causes a large drop in the water-surface tension, enabling hyphae to breach the interface and grow into the air, in both the primary and the secondary mycelium. In the latter mycelium POH3 maight also play a role in the emergence of fruiting bodies. Secreted POH3 could also play a role in facilitating lignin degradation. The polypeptide is Class I hydrophobin POH3 (Pleurotus ostreatus (Oyster mushroom)).